A 131-amino-acid chain; its full sequence is Transcription antitermination protein NusB (131 aa).

This sequence belongs to the NusB family.

Functionally, involved in transcription antitermination. Required for transcription of ribosomal RNA (rRNA) genes. Binds specifically to the boxA antiterminator sequence of the ribosomal RNA (rrn) operons. The chain is Transcription antitermination protein NusB from Ligilactobacillus salivarius (strain UCC118) (Lactobacillus salivarius).